The chain runs to 98 residues: Integration host factor subunit beta (98 aa).

This sequence belongs to the bacterial histone-like protein family. Heterodimer of an alpha and a beta chain.

Functionally, this protein is one of the two subunits of integration host factor, a specific DNA-binding protein that functions in genetic recombination as well as in transcriptional and translational control. The chain is Integration host factor subunit beta from Pseudomonas putida (strain W619).